Reading from the N-terminus, the 121-residue chain is Small ribosomal subunit protein eS24 (121 aa).

The protein belongs to the eukaryotic ribosomal protein eS24 family.

This Pyrobaculum aerophilum (strain ATCC 51768 / DSM 7523 / JCM 9630 / CIP 104966 / NBRC 100827 / IM2) protein is Small ribosomal subunit protein eS24.